Reading from the N-terminus, the 506-residue chain is Acetaldehyde dehydrogenase (506 aa).

Active-site residues include Glu262 and Cys301.

The protein belongs to the aldehyde dehydrogenase family.

It catalyses the reaction acetaldehyde + NAD(+) + H2O = acetate + NADH + 2 H(+). The protein operates within alcohol metabolism; ethanol degradation; acetate from ethanol: step 2/2. Catalyzes the NAD(+)-dependent oxidation of acetaldehyde to acetate. Is likely a component of the ethanol oxidation system that allows P.aeruginosa to grow on ethanol as the sole carbon and energy source. This is Acetaldehyde dehydrogenase from Pseudomonas aeruginosa.